Here is a 111-residue protein sequence, read N- to C-terminus: Natriuretic peptide TNP-b (111 aa).

Positions 1–27 are cleaved as a signal peptide; it reads MVGLSRLAGGGLLLLLLLALLPLALDG. The propeptide occupies 28 to 71; sequence KPAPLPQALPEALAGGTTALRRDVTEEQQQQLVAEESSGPAAGR. Disordered stretches follow at residues 51-77 and 92-111; these read VTEE…PKIG and SGLG…PGGS. The cysteines at positions 80 and 96 are disulfide-linked. A propeptide spanning residues 107 to 111 is cleaved from the precursor; sequence IPGGS.

Belongs to the natriuretic peptide family. As to expression, expressed by the venom gland.

The protein resides in the secreted. Functionally, snake venom natriuretic peptide that exhibits vasoactive and probable hypotensive activity. Is only weakly active on natriuretic peptide receptor-C (NPR3). The protein is Natriuretic peptide TNP-b of Oxyuranus scutellatus scutellatus (Australian taipan).